Here is a 502-residue protein sequence, read N- to C-terminus: Probable malate:quinone oxidoreductase (502 aa).

Belongs to the MQO family. FAD serves as cofactor.

It carries out the reaction (S)-malate + a quinone = a quinol + oxaloacetate. Its pathway is carbohydrate metabolism; tricarboxylic acid cycle; oxaloacetate from (S)-malate (quinone route): step 1/1. This is Probable malate:quinone oxidoreductase from Synechococcus sp. (strain CC9605).